The following is a 175-amino-acid chain: Secretion monitor (175 aa).

The signal sequence occupies residues 1–38 (MSIINFWRQFGRRYFWSHLLLGMVAAGIGMPSLVSAHA).

It belongs to the SecM family.

It is found in the cytoplasm. The protein localises to the cytosol. The protein resides in the periplasm. Its function is as follows. Regulates secA expression by translational coupling of the secM secA operon. Translational pausing at a specific Pro residue 5 residues before the end of the protein may allow disruption of a mRNA repressor helix that normally suppresses secA translation initiation. This is Secretion monitor from Proteus mirabilis (strain HI4320).